A 439-amino-acid chain; its full sequence is Dolichyl-diphosphooligosaccharide--protein glycosyltransferase 48 kDa subunit (439 aa).

The signal sequence occupies residues 1–26; it reads MEPSTAARAWALFWLLPPLLGAVCAS. Residues 27 to 410 are Lumenal-facing; that stretch reads GPRTLVLLDN…YERFIPSAYP (384 aa). Residues 411-430 traverse the membrane as a helical segment; the sequence is YYASAFSMMLGLFIFSIVFL. The Cytoplasmic segment spans residues 431-439; the sequence is HMKEKEKSD.

This sequence belongs to the DDOST 48 kDa subunit family. Component of the oligosaccharyltransferase (OST) complex. OST exists in two different complex forms which contain common core subunits RPN1, RPN2, OST48, OST4, DAD1 and TMEM258, either STT3A or STT3B as catalytic subunits, and form-specific accessory subunits. STT3A complex assembly occurs through the formation of 3 subcomplexes. Subcomplex 1 contains RPN1 and TMEM258, subcomplex 2 contains the STT3A-specific subunits STT3A, DC2/OSTC, and KCP2 as well as the core subunit OST4, and subcomplex 3 contains RPN2, DAD1, and OST48. The STT3A complex can form stable complexes with the Sec61 complex or with both the Sec61 and TRAP complexes. Interacts with SMIM22.

It is found in the endoplasmic reticulum membrane. It functions in the pathway protein modification; protein glycosylation. In terms of biological role, subunit of the oligosaccharyl transferase (OST) complex that catalyzes the initial transfer of a defined glycan (Glc(3)Man(9)GlcNAc(2) in eukaryotes) from the lipid carrier dolichol-pyrophosphate to an asparagine residue within an Asn-X-Ser/Thr consensus motif in nascent polypeptide chains, the first step in protein N-glycosylation. N-glycosylation occurs cotranslationally and the complex associates with the Sec61 complex at the channel-forming translocon complex that mediates protein translocation across the endoplasmic reticulum (ER). All subunits are required for a maximal enzyme activity. Required for the assembly of both SST3A- and SS3B-containing OST complexes. The chain is Dolichyl-diphosphooligosaccharide--protein glycosyltransferase 48 kDa subunit from Pongo abelii (Sumatran orangutan).